A 904-amino-acid polypeptide reads, in one-letter code: NADH-quinone oxidoreductase subunit G (904 aa).

Positions Met1–Glu83 constitute a 2Fe-2S ferredoxin-type domain. [2Fe-2S] cluster-binding residues include Cys34, Cys45, Cys48, and Cys67. One can recognise a 4Fe-4S His(Cys)3-ligated-type domain in the interval Glu83–Gly122. [4Fe-4S] cluster contacts are provided by His99, Cys103, Cys106, Cys112, Cys151, Cys154, Cys157, Cys201, Cys228, Cys231, Cys235, and Cys263. Residues Met221 to Asp277 form the 4Fe-4S Mo/W bis-MGD-type domain.

The protein belongs to the complex I 75 kDa subunit family. Composed of 13 different subunits. Subunits NuoCD, E, F, and G constitute the peripheral sector of the complex. Requires [2Fe-2S] cluster as cofactor. The cofactor is [4Fe-4S] cluster.

The enzyme catalyses a quinone + NADH + 5 H(+)(in) = a quinol + NAD(+) + 4 H(+)(out). Functionally, NDH-1 shuttles electrons from NADH, via FMN and iron-sulfur (Fe-S) centers, to quinones in the respiratory chain. The immediate electron acceptor for the enzyme in this species is believed to be ubiquinone. Couples the redox reaction to proton translocation (for every two electrons transferred, four hydrogen ions are translocated across the cytoplasmic membrane), and thus conserves the redox energy in a proton gradient. Required for plants roots colonization. The polypeptide is NADH-quinone oxidoreductase subunit G (nuoG) (Pseudomonas fluorescens).